The chain runs to 372 residues: Putative isochorismate synthase MenF (372 aa).

Residue Lys119 is the Proton acceptor of the active site. Catalysis depends on Glu175, which acts as the Proton donor. Residues Glu219 and Glu356 each contribute to the Mg(2+) site.

It belongs to the isochorismate synthase family. It depends on Mg(2+) as a cofactor.

It catalyses the reaction chorismate = isochorismate. It participates in quinol/quinone metabolism; 1,4-dihydroxy-2-naphthoate biosynthesis; 1,4-dihydroxy-2-naphthoate from chorismate: step 1/7. Its pathway is quinol/quinone metabolism; menaquinone biosynthesis. In terms of biological role, catalyzes the conversion of chorismate to isochorismate. This chain is Putative isochorismate synthase MenF (menF), found in Mycobacterium tuberculosis (strain CDC 1551 / Oshkosh).